A 437-amino-acid polypeptide reads, in one-letter code: Xylose isomerase (437 aa).

Catalysis depends on residues histidine 102 and aspartate 105. Mg(2+) is bound by residues glutamate 233, glutamate 269, histidine 272, aspartate 297, aspartate 308, aspartate 310, and aspartate 340.

This sequence belongs to the xylose isomerase family. In terms of assembly, homotetramer. The cofactor is Mg(2+).

Its subcellular location is the cytoplasm. It carries out the reaction alpha-D-xylose = alpha-D-xylulofuranose. The protein is Xylose isomerase of Novosphingobium aromaticivorans (strain ATCC 700278 / DSM 12444 / CCUG 56034 / CIP 105152 / NBRC 16084 / F199).